Reading from the N-terminus, the 312-residue chain is MPASHEASNYDEVSMQQSMLFSDGLQDLKNLRAQLYSAAEYFELSYTTDDKKQIVVETLKDYAVKALVNTVDHLGSVTYKVNDFIDEKVDEVSETELRVSCIEQRLRMCQEYMDHEGRSQQSLVIDTPKFHKRYILPAGEIMTATNLEKLKYFGSSLEDADDWNQFRNAVRATIRETPPPPVRKSTSQSSSPRQPPQRSATFSFTSTIPKKEQDKRSVSPHRFPLLRSGSVATRKSASISRPTTPSKSRSITPIRYPSEPRRSASVRVAFEKDNQKETEQQQPSKSKRLLKALLSRRKTKKDDTLYTFLDEY.

The segment at 173-287 is disordered; the sequence is TIRETPPPPV…TEQQQPSKSK (115 aa). The segment covering 183–199 has biased composition (low complexity); that stretch reads RKSTSQSSSPRQPPQRS. The segment covering 230-251 has biased composition (polar residues); it reads SVATRKSASISRPTTPSKSRSI. The segment covering 269-279 has biased composition (basic and acidic residues); the sequence is AFEKDNQKETE.

Belongs to the ABI family. Binds SCAR.

It is found in the cytoplasm. It localises to the cytoskeleton. Involved in regulation of actin and microtubule organization. Part of a WAVE complex that activates the Arp2/3 complex. The chain is Protein ABIL2 (ABIL2) from Arabidopsis thaliana (Mouse-ear cress).